A 749-amino-acid chain; its full sequence is Cytosolic phospholipase A2 (749 aa).

The interval 1–178 (MSFIDPYQHI…MKKLLGPKNS (178 aa)) is phospholipid binding. Residue Ser2 is modified to Phosphoserine. Residues 6–122 (PYQHIIVEHQ…KVGEKKEVPF (117 aa)) form the C2 domain. The Ca(2+) site is built by Asp40, Thr41, Asp43, Asn65, Asp93, Ala94, and Asn95. One can recognise a PLA2c domain in the interval 140–740 (SCPDLRFSMA…SNVEARRFFN (601 aa)). Ser228 functions as the Nucleophile in the catalytic mechanism. Residue Thr268 is modified to Phosphothreonine. The disordered stretch occupies residues 409–457 (GSQSRGSTMEEELENITTKHIVSNDSSDSDDESHEPKGTENEDAGSDYQ). A phosphoserine mark is found at Ser434, Ser435, and Ser437. Ser505 is modified (phosphoserine; by MAPK). Residue Ser515 is modified to Phosphoserine. Lys541 participates in a covalent cross-link: Glycyl lysine isopeptide (Lys-Gly) (interchain with G-Cter in SUMO2). Asp549 (proton acceptor) is an active-site residue. Lys606 participates in a covalent cross-link: Glycyl lysine isopeptide (Lys-Gly) (interchain with G-Cter in SUMO2). A phosphoserine mark is found at Ser727 and Ser729.

As to quaternary structure, interacts with KAT5. In terms of processing, phosphorylated at both Ser-505 and Ser-727 in response to mitogenic stimuli. In terms of tissue distribution, expressed in various cells and tissues such as macrophages, neutrophils, fibroblasts and lung endothelium. Expressed in platelets (at protein level).

The protein resides in the cytoplasm. It localises to the golgi apparatus membrane. Its subcellular location is the nucleus envelope. The enzyme catalyses a 1,2-diacyl-sn-glycero-3-phosphocholine + H2O = a 1-acyl-sn-glycero-3-phosphocholine + a fatty acid + H(+). It carries out the reaction a 1-O-alkyl-2-acyl-sn-glycero-3-phosphocholine + H2O = a 1-O-alkyl-sn-glycero-3-phosphocholine + a fatty acid + H(+). The catalysed reaction is a 1-acyl-sn-glycero-3-phosphocholine + H2O = sn-glycerol 3-phosphocholine + a fatty acid + H(+). It catalyses the reaction 1-hexadecanoyl-2-(5Z,8Z,11Z,14Z-eicosatetraenoyl)-sn-glycero-3-phosphocholine + H2O = 1-hexadecanoyl-sn-glycero-3-phosphocholine + (5Z,8Z,11Z,14Z)-eicosatetraenoate + H(+). The enzyme catalyses 1,2-di-(5Z,8Z,11Z,14Z-eicosatetraenoyl)-sn-glycero-3-phosphocholine + H2O = 1-(5Z,8Z,11Z,14Z-eicosatetraenoyl)-sn-glycero-3-phosphocholine + (5Z,8Z,11Z,14Z)-eicosatetraenoate + H(+). It carries out the reaction 1-octadecanoyl-2-(5Z,8Z,11Z,14Z-eicosatetraenoyl)-sn-glycero-3-phosphocholine + H2O = 1-octadecanoyl-sn-glycero-3-phosphocholine + (5Z,8Z,11Z,14Z)-eicosatetraenoate + H(+). The catalysed reaction is 1-hexadecanoyl-2-(9Z,12Z-octadecadienoyl)-sn-glycero-3-phosphocholine + H2O = (9Z,12Z)-octadecadienoate + 1-hexadecanoyl-sn-glycero-3-phosphocholine + H(+). It catalyses the reaction 1-octadecanoyl-2-(9Z,12Z,15Z-octadecatrienoyl)-sn-glycero-3-phosphocholine + H2O = (9Z,12Z,15Z)-octadecatrienoate + 1-octadecanoyl-sn-glycero-3-phosphocholine + H(+). The enzyme catalyses 1-(5Z,8Z,11Z,14Z-eicosatetraenoyl)-2-hexadecanoyl-sn-glycero-3-phosphocholine + H2O = 1-(5Z,8Z,11Z,14Z-eicosatetraenoyl)-sn-glycero-3-phosphocholine + hexadecanoate + H(+). It carries out the reaction 1-O-hexadecyl-2-(5Z,8Z,11Z,14Z)-eicosatetraenoyl-sn-glycero-3-phosphocholine + H2O = 1-O-hexadecyl-sn-glycero-3-phosphocholine + (5Z,8Z,11Z,14Z)-eicosatetraenoate + H(+). The catalysed reaction is 1,2-di-(9Z-octadecenoyl)-sn-glycero-3-phospho-(1'-sn-glycerol) + H2O = 1-(9Z-octadecenoyl)-sn-glycero-3-phospho-(1'-sn-glycerol) + (9Z)-octadecenoate + H(+). It catalyses the reaction 1-octadecanoyl-2-(5Z,8Z,11Z,14Z-eicosatetraenoyl)-sn-glycero-3-phosphate + H2O = 1-octadecanoyl-sn-glycero-3-phosphate + (5Z,8Z,11Z,14Z)-eicosatetraenoate + H(+). The enzyme catalyses 1-hexadecanoyl-sn-glycero-3-phosphocholine + H2O = sn-glycerol 3-phosphocholine + hexadecanoate + H(+). It carries out the reaction 2-(prostaglandin E2)-sn-glycero-3-phosphoethanolamine + H2O = sn-glycero-3-phosphoethanolamine + prostaglandin E2 + H(+). The catalysed reaction is 2-[(15S)-hydroxy-(5Z,8Z,11Z,13E)-eicosatetraenoyl]-sn-glycero-3-phosphocholine + H2O = (15S)-hydroxy-(5Z,8Z,11Z,13E)-eicosatetraenoate + sn-glycerol 3-phosphocholine + H(+). It catalyses the reaction 2-[(15R)-hydroxy-(5Z,8Z,11Z,13E)-eicosatetraenoyl]-sn-glycero-3-phosphocholine + H2O = (15R)-hydroxy-(5Z,8Z,11Z,13E)-eicosatetraenoate + sn-glycerol 3-phosphocholine + H(+). The enzyme catalyses 2-(prostaglandin E2)-sn-glycero-3-phosphocholine + H2O = prostaglandin E2 + sn-glycerol 3-phosphocholine + H(+). It carries out the reaction 2-[(11R)-hydroxy-(5Z,8Z,12E,14Z)-eicosatetraenoyl]-sn-glycero-3-phosphocholine + H2O = (11R)-hydroxy-(5Z,8Z,12E,14Z)-eicosatetraenoate + sn-glycerol 3-phosphocholine + H(+). The catalysed reaction is 1-(5Z,8Z,11Z,14Z-eicosatetraenoyl)-2-O-hexadecyl-sn-glycero-3-phosphocholine + H2O = 2-O-hexadecyl-sn-glycero-3-phosphocholine + (5Z,8Z,11Z,14Z)-eicosatetraenoate + H(+). It catalyses the reaction 1-octadecanoyl-2-(5Z,8Z,11Z,14Z-eicosatetraenoyl)-sn-glycero-3-phosphocholine + glycerol = 1-(5Z,8Z,11Z,14Z-eicosatetraenoyl)-glycerol + 1-octadecanoyl-sn-glycero-3-phosphocholine. The enzyme catalyses 1-octadecanoyl-2-(9Z,12Z,15Z-octadecatrienoyl)-sn-glycero-3-phosphocholine + glycerol = 1-(9Z,12Z,15Z-octadecatrienoyl)-glycerol + 1-octadecanoyl-sn-glycero-3-phosphocholine. It participates in membrane lipid metabolism; glycerophospholipid metabolism. Its pathway is lipid metabolism; arachidonate metabolism. The protein operates within lipid metabolism; prostaglandin biosynthesis. It functions in the pathway lipid metabolism; leukotriene B4 biosynthesis. With respect to regulation, activated by cytosolic calcium, which is necessary for binding to membrane lipids. Activated by phosphorylation in response to mitogenic stimuli. Activated by ceramide-1-phosphate. Binding (via C2 domain) to ceramide-1-phosphate increases the affinity for membrane lipids. Can be activated by phosphoinositides in the absence of calcium. Inhibited by ANXA5 in a calcium- and substrate-dependent way. In terms of biological role, has primarily calcium-dependent phospholipase and lysophospholipase activities, with a major role in membrane lipid remodeling and biosynthesis of lipid mediators of the inflammatory response. Plays an important role in embryo implantation and parturition through its ability to trigger prostanoid production. Preferentially hydrolyzes the ester bond of the fatty acyl group attached at sn-2 position of phospholipids (phospholipase A2 activity). Selectively hydrolyzes sn-2 arachidonoyl group from membrane phospholipids, providing the precursor for eicosanoid biosynthesis via the cyclooxygenase pathway. In an alternative pathway of eicosanoid biosynthesis, hydrolyzes sn-2 fatty acyl chain of eicosanoid lysophopholipids to release free bioactive eicosanoids. Hydrolyzes the ester bond of the fatty acyl group attached at sn-1 position of phospholipids (phospholipase A1 activity) only if an ether linkage rather than an ester linkage is present at the sn-2 position. This hydrolysis is not stereospecific. Has calcium-independent phospholipase A2 and lysophospholipase activities in the presence of phosphoinositides. Has O-acyltransferase activity. Catalyzes the transfer of fatty acyl chains from phospholipids to a primary hydroxyl group of glycerol (sn-1 or sn-3), potentially contributing to monoacylglycerol synthesis. This is Cytosolic phospholipase A2 (PLA2G4A) from Homo sapiens (Human).